Here is a 264-residue protein sequence, read N- to C-terminus: Sirohydrochlorin cobaltochelatase (264 aa).

6 residues coordinate Co-sirohydrochlorin: Gly45, Ile84, Ile85, Asp88, Glu89, and Lys92. His145 serves as the catalytic Proton acceptor. Residues His145 and Glu175 each coordinate Co(2+). Residues Leu202, Val203, and His207 each contribute to the Co-sirohydrochlorin site. His207 provides a ligand contact to Co(2+).

It belongs to the CbiK family. In terms of assembly, homotrimer.

The enzyme catalyses Co-sirohydrochlorin + 2 H(+) = sirohydrochlorin + Co(2+). The catalysed reaction is Co-precorrin-2 + 3 H(+) = precorrin-2 + Co(2+). Its pathway is cofactor biosynthesis; adenosylcobalamin biosynthesis; cob(II)yrinate a,c-diamide from sirohydrochlorin (anaerobic route): step 1/10. Functionally, cobalt chelatase responsible for the insertion of cobalt during anaerobic cobalamin biosynthesis. Can catalyze the insertion of Co(2+) into either sirohydrochlorin or precorrin-2. It is not clear which is the natural substrate in Salmonella. This chain is Sirohydrochlorin cobaltochelatase, found in Salmonella typhimurium (strain LT2 / SGSC1412 / ATCC 700720).